The primary structure comprises 422 residues: Cysteate synthase (422 aa).

Position 105 is an N6-(pyridoxal phosphate)lysine (Lys-105). Pyridoxal 5'-phosphate is bound by residues Asn-131 and Thr-379.

This sequence belongs to the threonine synthase family. Cysteate synthase subfamily. As to quaternary structure, homotrimer. It depends on pyridoxal 5'-phosphate as a cofactor.

It catalyses the reaction O-phospho-L-serine + sulfite + H(+) = L-cysteate + phosphate. The protein operates within cofactor biosynthesis; coenzyme M biosynthesis. Specifically catalyzes the beta-elimination of phosphate from L-phosphoserine and the beta-addition of sulfite to the dehydroalanine intermediate to produce L-cysteate. The polypeptide is Cysteate synthase (Methanospirillum hungatei JF-1 (strain ATCC 27890 / DSM 864 / NBRC 100397 / JF-1)).